Here is a 1770-residue protein sequence, read N- to C-terminus: AF4/FMR2 family member lilli (1770 aa).

Composition is skewed to low complexity over residues 1-19, 154-204, and 227-269; these read MAQQQQQQQQQQHLQHPHQ, LGHS…YLKQ, and PSSS…GTTP. Disordered regions lie at residues 1–28, 134–327, 402–660, 761–805, 822–1173, and 1291–1390; these read MAQQQQQQQQQQHLQHPHQNTNSNNQLQ, SRHA…EKDI, TSLL…PGNV, LHSA…LQLP, MQKA…KQGQ, and KHEH…QISK. Residues 402–414 are compositionally biased toward polar residues; that stretch reads TSLLTTPPHASQG. The span at 434 to 447 shows a compositional bias: low complexity; the sequence is KAAAALSPTAAAKP. Residues 448–461 show a composition bias toward basic and acidic residues; that stretch reads LKTEKNHTLEKQDS. The segment covering 463–474 has biased composition (acidic residues); sequence LENDLELSESED. Residues serine 470 and serine 472 each carry the phosphoserine modification. The span at 483 to 503 shows a compositional bias: low complexity; it reads SAGNSSNSSESDSSESGSESS. Over residues 511-520 the composition is skewed to basic residues; it reads QHHHHNHHHQ. Residues 521 to 552 show a composition bias toward low complexity; the sequence is QQQQQLQQQQQQQLLQQKQQHQQILQQQQRQL. Residues 582 to 614 show a composition bias toward gly residues; sequence FGSGGAGNGGCSTASSGGGGGGSGSGGGSGSSS. Low complexity predominate over residues 615 to 625; it reads GIGTMSSGSSS. 2 stretches are compositionally biased toward polar residues: residues 626–638 and 647–659; these read NKTPSPTESNKWT and ANQTSSESVSPGN. Low complexity predominate over residues 768 to 800; that stretch reads SDSGTSGSGSTSSSSSSSDSAPGEVVPMPGPGE. Basic residues predominate over residues 844-854; sequence QRQKKPRKKKP. Phosphoserine is present on residues serine 863 and serine 864. Low complexity-rich tracts occupy residues 880-893, 909-928, 994-1028, 1071-1081, and 1111-1131; these read AAAAAAAQAQATAT, QQQSGGSGNLSSASAGSSSQ, ANASAVAAASSSSDEDSSSSTGSTGSKSSSSSSSS, SGSSSPSSSSS, and SQHSQQLSSSECSSSSGSSTS. A DNA-binding region (a.T hook) is located at residues 900–912; the sequence is KKGRGRPRKQQQS. A phosphoserine mark is found at serine 920 and serine 922. Composition is skewed to basic and acidic residues over residues 1295-1312 and 1321-1355; these read PHPVKPEPELDAGYESKF and FQLKQERDRERERERDRDRERERERERDREREREQ. At serine 1442 the chain carries Phosphoserine. Low complexity-rich tracts occupy residues 1483–1499 and 1656–1676; these read AAATATAATSTTGTSTA and GNTPSSISPSNSVGSQGSGSN. Disordered regions lie at residues 1483–1502 and 1656–1683; these read AAATATAATSTTGTSTAPPA and GNTPSSISPSNSVGSQGSGSNTPPGKIV.

This sequence belongs to the AF4 family.

The protein localises to the nucleus. Has a role in transcriptional regulation. Acts in parallel with the Ras/MAPK and the PI3K/PKB pathways in the control of cell identity and cellular growth. Essential for regulation of the cytoskeleton and cell growth but not for cell proliferation or growth rate. Required specifically for the microtubule-based basal transport of lipid droplets. Plays a partially redundant function downstream of Raf in cell fate specification in the developing eye. Pair-rule protein that regulates embryonic cellularization, gastrulation and segmentation. This is AF4/FMR2 family member lilli from Drosophila pseudoobscura pseudoobscura (Fruit fly).